The chain runs to 160 residues: DNA polymerase delta subunit 4 (160 aa).

Residues 1–48 form a disordered region; it reads MKKRTTQAKKSGQNTNIRDVFPHVVRSNSSQSHIGKKVSSEQSPTPDV. Polar residues predominate over residues 8 to 17; sequence AKKSGQNTNI.

It belongs to the DNA polymerase delta subunit 4 family. In terms of assembly, heterotetramer that consist of the pol3, cdc1, cdc27 and cdm1 subunits. Interacts with cdc1 and pol3.

Its subcellular location is the nucleus. In terms of biological role, appears to have a role in the stabilization of the DNA polymerase delta complex. The polypeptide is DNA polymerase delta subunit 4 (cdm1) (Schizosaccharomyces pombe (strain 972 / ATCC 24843) (Fission yeast)).